Reading from the N-terminus, the 145-residue chain is Transcription antitermination protein NusB (145 aa).

Belongs to the NusB family.

Its function is as follows. Involved in transcription antitermination. Required for transcription of ribosomal RNA (rRNA) genes. Binds specifically to the boxA antiterminator sequence of the ribosomal RNA (rrn) operons. The protein is Transcription antitermination protein NusB of Thiobacillus denitrificans (strain ATCC 25259 / T1).